Consider the following 290-residue polypeptide: Translin-associated protein X (290 aa).

The tract at residues 1–34 (MNGKEGPGGFRKRKHDNFPHNQRREGKDASSSSP) is disordered. The segment covering 16-28 (DNFPHNQRREGKD) has biased composition (basic and acidic residues). Residues 73 to 208 (LLHRITSAPD…MRMCINSVGN (136 aa)) form an interaction with C1D region. 2 residues coordinate Mg(2+): glutamate 129 and glutamate 197. Lysine 279 is covalently cross-linked (Glycyl lysine isopeptide (Lys-Gly) (interchain with G-Cter in SUMO2)).

This sequence belongs to the translin family. In terms of assembly, ring-shaped heterooctamer of six TSN and two TSNAX subunits. Interacts with GOLGA3, TSNAXIP1, SUN1 and AKAP9. Interacts with the homodimeric form of C1D following gamma-radiation. Interacts with TSN and C1D in a mutually exclusive manner. Post-translationally, sumoylated with SUMO1. In terms of tissue distribution, detected in cerebellum.

The protein localises to the cytoplasm. The protein resides in the perinuclear region. Its subcellular location is the golgi apparatus. It localises to the nucleus. Acts in combination with TSN as an endonuclease involved in the activation of the RNA-induced silencing complex (RISC). Possible role in spermatogenesis. This is Translin-associated protein X (Tsnax) from Rattus norvegicus (Rat).